Consider the following 384-residue polypeptide: Odorant receptor 46a, isoform B (384 aa).

Over 1–37 the chain is Cytoplasmic; sequence MVTEDFYKYQVWYFQILGVWQLPTWAADHQRRFQSMR. A helical transmembrane segment spans residues 38 to 58; that stretch reads FGFILVILFIMLLLFSFEMLN. A glycan (N-linked (GlcNAc...) asparagine) is linked at asparagine 59. Residues 59–65 are Extracellular-facing; sequence NISQVRE. The helical transmembrane segment at 66 to 86 threads the bilayer; sequence ILKVFFMFATEISCMAKLLHL. Over 87–130 the chain is Cytoplasmic; sequence KLKSRKLAGLVDAMLSPEFGVKSEQEMQMLELDRVAVVRMRNSY. Residues 131-151 form a helical membrane-spanning segment; the sequence is GIMSLGAASLILIVPCFDNFG. Over 152–165 the chain is Extracellular; sequence ELPLAMLEVCSIEG. Residues 166-186 form a helical membrane-spanning segment; sequence WICYWSQYLFHSICLLPTCVL. Residues 187–247 are Cytoplasmic-facing; it reads NITYDSVAYS…YNRIVRFKDL (61 aa). A helical transmembrane segment spans residues 248–268; it reads VELFIKGPGSVQLMCSVLVLV. Topologically, residues 269–283 are extracellular; the sequence is SNLYDMSTMSIANGD. Residues 284 to 304 form a helical membrane-spanning segment; that stretch reads AIFMLKTCIYQLVMLWQIFII. Topologically, residues 305–348 are cytoplasmic; sequence CYASNEVTVQSSRLCHSIYSSQWTGWNRANRRIVLLMMQRFNSP. The helical transmembrane segment at 349-369 threads the bilayer; sequence MLLSTFNPTFAFSLEAFGSIV. Asparagine 370 carries an N-linked (GlcNAc...) asparagine glycan. Topologically, residues 370-384 are extracellular; it reads NCSYSYFALLKRVNS.

The protein belongs to the insect chemoreceptor superfamily. Heteromeric odorant receptor channel (TC 1.A.69) family. Or2a subfamily. As to quaternary structure, interacts with Orco. Complexes exist early in the endomembrane system in olfactory sensory neurons (OSNs), coupling these complexes to the conserved ciliary trafficking pathway. In terms of tissue distribution, isoform B is expressed in the antenna.

The protein resides in the cell membrane. Odorant receptor which mediates acceptance or avoidance behavior, depending on its substrates. The odorant receptor repertoire encodes a large collection of odor stimuli that vary widely in identity, intensity, and duration. May form a complex with Orco to form odorant-sensing units, providing sensitive and prolonged odorant signaling and calcium permeability. In Drosophila melanogaster (Fruit fly), this protein is Odorant receptor 46a, isoform B (Or46a).